The chain runs to 346 residues: UPF0283 membrane protein VP1870 (346 aa).

The interval 1–30 (MSELKQKQIFSEKALEKEQQSDSPELTAQK) is disordered. The segment covering 21–30 (SDSPELTAQK) has biased composition (polar residues). A run of 2 helical transmembrane segments spans residues 73-93 (VFAT…VTAV) and 98-118 (WLAL…LGAI).

The protein belongs to the UPF0283 family.

It is found in the cell inner membrane. The chain is UPF0283 membrane protein VP1870 from Vibrio parahaemolyticus serotype O3:K6 (strain RIMD 2210633).